The sequence spans 861 residues: Replication factor C subunit 1 (861 aa).

The interval 1–103 is disordered; it reads MVNISDFFGK…SSKSSDSASN (103 aa). A compositionally biased stretch (polar residues) spans 16–28; sequence RSSTSRPTRQVGS. Residue threonine 38 is modified to Phosphothreonine. Phosphoserine is present on serine 40. Threonine 63 is subject to Phosphothreonine. The region spanning 153-243 is the BRCT domain; the sequence is GKPNCLLGLT…PAEGGDGEAA (91 aa). ATP-binding positions include threonine 299, cysteine 311, 353-361, and asparagine 456; that span reads GPPGIGKTT. The tract at residues 788–861 is disordered; sequence STIGGGGVGT…GGSKKRKTKA (74 aa). A compositionally biased stretch (acidic residues) spans 803–823; the sequence is DFEDVVDADDNPVPADDEETQ. Short sequence motifs (nuclear localization signal) lie at residues 830 to 834 and 855 to 860; these read KKDKL and KKRKTK. A compositionally biased stretch (basic residues) spans 836 to 861; it reads KQKAKPTKRKTATSKPGGSKKRKTKA.

Belongs to the activator 1 large subunit family. In terms of assembly, replication factor C (RFC) is a heteropentamer of subunits RFC1, RFC2, RFC3, RFC4 and RFC5 and forms a complex with POL30/PCNA in the presence of ATP. Interacts with ECO1 and POL30/PCNA.

It is found in the nucleus. Functionally, component of the ATP-dependent clamp loader RFC complex for the POL30/PCNA homotrimer DNA clamp. During a clamp loading circle, the RFC:clamp complex binds to DNA and the recognition of the double-stranded/single-stranded junction stimulates ATP hydrolysis by RFC. The complex presumably provides bipartite ATP sites in which one subunit supplies a catalytic site for hydrolysis of ATP bound to the neighboring subunit. Dissociation of RFC from the clamp leaves the clamp encircling DNA. Replication factor C (RFC or activator 1) complex acts during elongation of primed DNA templates by DNA polymerase delta and epsilon. RFC has an essential but redundant activity in sister chromatid cohesion establishment. This Saccharomyces cerevisiae (strain ATCC 204508 / S288c) (Baker's yeast) protein is Replication factor C subunit 1 (RFC1).